We begin with the raw amino-acid sequence, 206 residues long: LexA repressor (206 aa).

Residues 28 to 48 (RAEIARRLGFKSANAAEEHLK) constitute a DNA-binding region (H-T-H motif). Catalysis depends on for autocatalytic cleavage activity residues serine 123 and lysine 160.

It belongs to the peptidase S24 family. Homodimer.

It catalyses the reaction Hydrolysis of Ala-|-Gly bond in repressor LexA.. Its function is as follows. Represses a number of genes involved in the response to DNA damage (SOS response), including recA and lexA. In the presence of single-stranded DNA, RecA interacts with LexA causing an autocatalytic cleavage which disrupts the DNA-binding part of LexA, leading to derepression of the SOS regulon and eventually DNA repair. The sequence is that of LexA repressor from Shewanella pealeana (strain ATCC 700345 / ANG-SQ1).